The following is a 210-amino-acid chain: LexA repressor (210 aa).

Residues 28–48 (FEEIAEGMGLSSLATVHKHIG) constitute a DNA-binding region (H-T-H motif). Catalysis depends on for autocatalytic cleavage activity residues serine 131 and lysine 169.

Belongs to the peptidase S24 family. Homodimer.

The enzyme catalyses Hydrolysis of Ala-|-Gly bond in repressor LexA.. Its function is as follows. Represses a number of genes involved in the response to DNA damage (SOS response), including recA and lexA. In the presence of single-stranded DNA, RecA interacts with LexA causing an autocatalytic cleavage which disrupts the DNA-binding part of LexA, leading to derepression of the SOS regulon and eventually DNA repair. The polypeptide is LexA repressor (Koribacter versatilis (strain Ellin345)).